The sequence spans 1823 residues: Bromodomain-containing protein DDB_G0280777 (1823 aa).

Disordered regions lie at residues 44–83 (DNNNNKRFNENGNQINQIDFNSNKEEEKEEKEEKEKEEDE) and 200–281 (LKQT…RTTS). Residues 65-77 (SNKEEEKEEKEEK) show a composition bias toward basic and acidic residues. Over residues 210–224 (KRRNQQHQNLLKKQK) the composition is skewed to basic residues. The segment covering 225 to 250 (IQKEKEEREQKEKEQKEKEQKEKEEQ) has biased composition (basic and acidic residues). A compositionally biased stretch (low complexity) spans 251–262 (QQQLFLLQQQQQ). The region spanning 306-413 (EAQEEMYDQL…KKSKDLMKNV (108 aa)) is the Bromo domain. Disordered stretches follow at residues 429–654 (ENKN…EEQT), 753–781 (NCNNNNNNNDNNNNNNIDNDNDNNNNNSL), 855–886 (INDNDDDNNNNNNNNNNNNNNNNNNNNNNNKP), 949–993 (NSSK…DEDF), 1055–1079 (LPNNKSTTTQTTPTTQLQPPPPPPS), 1190–1386 (IDPK…IQAS), 1453–1477 (QLQQQTRQPSQPQTPQMQSQPQTPQ), and 1679–1823 (QQQQ…QKKQ). 4 stretches are compositionally biased toward low complexity: residues 432-486 (NNNN…NTPL), 494-511 (CSPSTISTVSSTPTTPQS), 520-555 (QQQQQQQTQAQQQPTSNSPRNTTTTTTTITSPISPR), and 570-579 (SSSSLSSSSL). Residues 580–590 (ALNSQNENGVN) are compositionally biased toward polar residues. A compositionally biased stretch (basic and acidic residues) spans 601 to 614 (MESEESTNVKKEEN). A compositionally biased stretch (acidic residues) spans 631-643 (EGEEQQEQEDEEQ). Low complexity-rich tracts occupy residues 753 to 779 (NCNNNNNNNDNNNNNNIDNDNDNNNNN), 863 to 884 (NNNNNNNNNNNNNNNNNNNNNN), 949 to 958 (NSSKSNNNSN), 1055 to 1071 (LPNNKSTTTQTTPTTQL), and 1205 to 1378 (NNNN…NNNN). The segment covering 1679-1705 (QQQQPQQQQQQPQQQPQQQPQQQQQPQ) has biased composition (low complexity). Composition is skewed to basic and acidic residues over residues 1716-1737 (PKEKDKEREKEKEREREKEKDR) and 1744-1755 (KTESKKESKKSL). 2 stretches are compositionally biased toward low complexity: residues 1756-1767 (NDSSNSDINTSV) and 1789-1806 (SSKQPQTTQSNTTTTQDS). Basic residues predominate over residues 1813 to 1823 (KKKRGRPQKKQ).

In Dictyostelium discoideum (Social amoeba), this protein is Bromodomain-containing protein DDB_G0280777.